Reading from the N-terminus, the 142-residue chain is Movement protein (142 aa).

The disordered stretch occupies residues 1–142 (MDLPEDQARF…LDRSESLSRY (142 aa)). 2 stretches are compositionally biased toward polar residues: residues 9–22 (RFTN…TSME) and 33–43 (LYQSASRSQMA). Residues 50-62 (SIISRTSSWRTSP) show a composition bias toward low complexity. Composition is skewed to polar residues over residues 74-95 (MNSI…SASP) and 113-124 (TTLQRTNSGFST). A compositionally biased stretch (basic and acidic residues) spans 125 to 142 (KETEMPRLLDRSESLSRY).

It belongs to the luteoviruses movement protein family.

Transports viral genome to neighboring plant cells directly through plasmosdesmata, without any budding. The movement protein allows efficient cell to cell propagation, by bypassing the host cell wall barrier. The protein is Movement protein of Cicer arietinum (Chickpea).